The chain runs to 91 residues: UPF0335 protein BRADO1188 (91 aa).

Belongs to the UPF0335 family.

The protein is UPF0335 protein BRADO1188 of Bradyrhizobium sp. (strain ORS 278).